A 118-amino-acid chain; its full sequence is Large ribosomal subunit protein bL20 (118 aa).

The protein belongs to the bacterial ribosomal protein bL20 family.

In terms of biological role, binds directly to 23S ribosomal RNA and is necessary for the in vitro assembly process of the 50S ribosomal subunit. It is not involved in the protein synthesizing functions of that subunit. This is Large ribosomal subunit protein bL20 from Staphylococcus aureus (strain Mu3 / ATCC 700698).